Consider the following 309-residue polypeptide: Transcription elongation factor S-II (309 aa).

In terms of domain architecture, TFIIS N-terminal spans 5 to 79; that stretch reads EVLVHVKNLE…SSWKDAINKN (75 aa). Positions 78-142 are disordered; sequence KNKRSRQAQQ…NSKNDGVDTA (65 aa). Residues 88 to 102 are compositionally biased toward basic and acidic residues; it reads HHQDHAPGNAEDKTT. The span at 103 to 120 shows a compositional bias: polar residues; it reads VGESVNGVQQPASSQSDA. Ser-116 bears the Phosphoserine mark. One can recognise a TFIIS central domain in the interval 148–264; that stretch reads LRDQVLKALY…NAQGATIERS (117 aa). Residues 267–307 form a TFIIS-type zinc finger; sequence DRFTCGKCKEKKVSYYQLQTRSADEPLTTFCTCEACGNRWK. Residues Cys-271, Cys-274, Cys-299, and Cys-302 each coordinate Zn(2+).

The protein belongs to the TFS-II family.

It localises to the nucleus. Functionally, necessary for efficient RNA polymerase II transcription elongation past template-encoded arresting sites. The arresting sites in DNA have the property of trapping a certain fraction of elongating RNA polymerases that pass through, resulting in locked ternary complexes. Cleavage of the nascent transcript by S-II allows the resumption of elongation from the new 3'-terminus. In terms of biological role, can promote the transfer of one strand of a double-stranded DNA molecule to a homologous single strand and thus may be involved in recombination. This Saccharomyces cerevisiae (strain ATCC 204508 / S288c) (Baker's yeast) protein is Transcription elongation factor S-II (DST1).